Here is a 421-residue protein sequence, read N- to C-terminus: ATP-dependent RNA helicase RhlB (421 aa).

A Q motif motif is present at residues 9 to 37; that stretch reads QKFSDFALHPQVVEALEKKRFYNCTPIQA. The 180-residue stretch at 40–219 folds into the Helicase ATP-binding domain; the sequence is LPLTLAGRDV…FEQMNNAEYV (180 aa). Residue 53–60 coordinates ATP; sequence AQTGTGKT. Residues 165–168 carry the DEAD box motif; sequence DEAD. One can recognise a Helicase C-terminal domain in the interval 245 to 390; the sequence is RLLQTLIEEE…VSKYNPEALM (146 aa). The interval 396 to 421 is disordered; the sequence is PLRLTRSRPGNGPRRAGAPRNRRRSG. Residues 402–414 are compositionally biased toward low complexity; it reads SRPGNGPRRAGAP.

Belongs to the DEAD box helicase family. RhlB subfamily. As to quaternary structure, component of the RNA degradosome, which is a multiprotein complex involved in RNA processing and mRNA degradation.

It is found in the cytoplasm. It carries out the reaction ATP + H2O = ADP + phosphate + H(+). Its function is as follows. DEAD-box RNA helicase involved in RNA degradation. Has RNA-dependent ATPase activity and unwinds double-stranded RNA. The protein is ATP-dependent RNA helicase RhlB of Salmonella dublin (strain CT_02021853).